A 507-amino-acid chain; its full sequence is Probable cyclic di-GMP phosphodiesterase PdeG (507 aa).

2 helical membrane-spanning segments follow: residues 4–24 (TLIP…ILNI) and 217–237 (LIDK…AAAF). The EAL domain occupies 246 to 500 (SATPEEILRR…DLVKIILSKP (255 aa)).

The protein localises to the cell membrane. The enzyme catalyses 3',3'-c-di-GMP + H2O = 5'-phosphoguanylyl(3'-&gt;5')guanosine + H(+). In terms of biological role, phosphodiesterase (PDE) that catalyzes the hydrolysis of cyclic-di-GMP (c-di-GMP) to 5'-pGpG. In Escherichia coli (strain K12), this protein is Probable cyclic di-GMP phosphodiesterase PdeG.